The following is a 338-amino-acid chain: NADH-quinone oxidoreductase subunit H (338 aa).

8 consecutive transmembrane segments (helical) span residues 22 to 42 (VVQAVVILLVVVLVAALMSFI), 96 to 116 (VAMATAVLSFMVIPVSPALGV), 121 to 141 (IGLLFFMAMAGIAVYAVLFGG), 161 to 181 (ISYEVFLGISLMGVVAIAGSF), 193 to 213 (VWFIIPQFLGFLIFVVAGVAV), 249 to 269 (YVNVVLISALIVTLFFGGWLA), 277 to 297 (FVPPVFWFVIKTAFFVMMFVL), and 315 to 335 (WKICLPLALVNLLVTGAVILM).

It belongs to the complex I subunit 1 family. As to quaternary structure, NDH-1 is composed of 14 different subunits. Subunits NuoA, H, J, K, L, M, N constitute the membrane sector of the complex.

Its subcellular location is the cell inner membrane. The enzyme catalyses a quinone + NADH + 5 H(+)(in) = a quinol + NAD(+) + 4 H(+)(out). Functionally, NDH-1 shuttles electrons from NADH, via FMN and iron-sulfur (Fe-S) centers, to quinones in the respiratory chain. The immediate electron acceptor for the enzyme in this species is believed to be ubiquinone. Couples the redox reaction to proton translocation (for every two electrons transferred, four hydrogen ions are translocated across the cytoplasmic membrane), and thus conserves the redox energy in a proton gradient. This subunit may bind ubiquinone. The protein is NADH-quinone oxidoreductase subunit H of Acinetobacter baumannii (strain ATCC 17978 / DSM 105126 / CIP 53.77 / LMG 1025 / NCDC KC755 / 5377).